We begin with the raw amino-acid sequence, 72 residues long: DNA-directed RNA polymerase subunit omega (72 aa).

Belongs to the RNA polymerase subunit omega family. In terms of assembly, the RNAP catalytic core consists of 2 alpha, 1 beta, 1 beta' and 1 omega subunit. When a sigma factor is associated with the core the holoenzyme is formed, which can initiate transcription.

The enzyme catalyses RNA(n) + a ribonucleoside 5'-triphosphate = RNA(n+1) + diphosphate. Functionally, promotes RNA polymerase assembly. Latches the N- and C-terminal regions of the beta' subunit thereby facilitating its interaction with the beta and alpha subunits. This is DNA-directed RNA polymerase subunit omega from Petrotoga mobilis (strain DSM 10674 / SJ95).